We begin with the raw amino-acid sequence, 309 residues long: MAETEWTPEALSGRYEEIKSCIPQQLEAYARFLREAAPEDLRRWQQIAQDLKLELNLENGRIKYKKEFKPLELPVDICYIRHGKTQGNTEPRVFQGQVDYANNQLTQQGQQQAAAAATKLEAMAAAKEFIPDLLLSSPLLRAVHTAQPFVDANPKPLFRVLPELAEMAFGEWDNRKVAELEKDDPAHLFYLQQNAVIKAKGPHRICCQLWQSPEWLEGKKELPAENFLECLDRQRKALIKVGEIAKELCGPSCGERKPRVAVYGHSMAGAAVSVLLGFGKEDQLGFLGFDGNYIMPNATPTILIPNAKP.

The active-site Tele-phosphohistidine intermediate is H82. The active-site Proton donor/acceptor is the E166.

Belongs to the phosphoglycerate mutase family.

It catalyses the reaction D-mannitol 1-phosphate + H2O = D-mannitol + phosphate. Its activity is regulated as follows. By diethyl pyrocarbonate (DEPC). Functionally, key enzyme for mannitol biosynthesis. This Eimeria tenella (Coccidian parasite) protein is Mannitol-1-phosphatase.